A 588-amino-acid chain; its full sequence is Proline--tRNA ligase (588 aa).

The protein belongs to the class-II aminoacyl-tRNA synthetase family. ProS type 1 subfamily. As to quaternary structure, homodimer.

The protein resides in the cytoplasm. It carries out the reaction tRNA(Pro) + L-proline + ATP = L-prolyl-tRNA(Pro) + AMP + diphosphate. Its function is as follows. Catalyzes the attachment of proline to tRNA(Pro) in a two-step reaction: proline is first activated by ATP to form Pro-AMP and then transferred to the acceptor end of tRNA(Pro). As ProRS can inadvertently accommodate and process non-cognate amino acids such as alanine and cysteine, to avoid such errors it has two additional distinct editing activities against alanine. One activity is designated as 'pretransfer' editing and involves the tRNA(Pro)-independent hydrolysis of activated Ala-AMP. The other activity is designated 'posttransfer' editing and involves deacylation of mischarged Ala-tRNA(Pro). The misacylated Cys-tRNA(Pro) is not edited by ProRS. The chain is Proline--tRNA ligase from Corynebacterium efficiens (strain DSM 44549 / YS-314 / AJ 12310 / JCM 11189 / NBRC 100395).